The sequence spans 142 residues: Group IIE secretory phospholipase A2 (142 aa).

An N-terminal signal peptide occupies residues 1–19 (MKSPHVLVFLCLLVALVTG). The Ca(2+) site is built by Asp41, Gly43, Tyr45, Gly47, and Gly49. 7 cysteine pairs are disulfide-bonded: Cys44–Cys135, Cys46–Cys62, Cys61–Cys115, Cys67–Cys142, Cys68–Cys108, Cys77–Cys101, and Cys95–Cys106. The active site involves His65. Asp66 serves as a coordination point for Ca(2+). Asp109 is a catalytic residue. Residues Tyr130 and Asn132 each coordinate Ca(2+).

Belongs to the phospholipase A2 family. The cofactor is Ca(2+). In terms of tissue distribution, restricted to the brain, heart, lung, and placenta.

The protein resides in the secreted. It is found in the cytoplasm. The catalysed reaction is a 1,2-diacyl-sn-glycero-3-phosphoethanolamine + H2O = a 1-acyl-sn-glycero-3-phosphoethanolamine + a fatty acid + H(+). It catalyses the reaction 1-hexadecanoyl-2-(9Z-octadecenoyl)-sn-glycero-3-phosphoethanolamine + H2O = 1-hexadecanoyl-sn-glycero-3-phosphoethanolamine + (9Z)-octadecenoate + H(+). It carries out the reaction 1-hexadecanoyl-2-(9Z,12Z-octadecadienoyl)-sn-glycero-3-phosphoethanolamine + H2O = 1-hexadecanoyl-sn-glycero-3-phosphoethanolamine + (9Z,12Z)-octadecadienoate + H(+). The enzyme catalyses 1-hexadecanoyl-2-(5Z,8Z,11Z,14Z-eicosatetraenoyl)-sn-glycero-3-phosphoethanolamine + H2O = 1-hexadecanoyl-sn-glycero-3-phosphoethanolamine + (5Z,8Z,11Z,14Z)-eicosatetraenoate + H(+). The catalysed reaction is 1,2-dihexadecanoyl-sn-glycero-3-phospho-(1'-sn-glycerol) + H2O = 1-hexadecanoyl-sn-glycero-3-phospho-(1'-sn-glycerol) + hexadecanoate + H(+). It catalyses the reaction 1-hexadecanoyl-2-(9Z-octadecenoyl)-sn-glycero-3-phosphoglycerol + H2O = 1-hexadecanoyl-sn-glycero-3-phosphoglycerol + (9Z)-octadecenoate + H(+). It carries out the reaction a 1,2-diacyl-sn-glycero-3-phosphocholine + H2O = a 1-acyl-sn-glycero-3-phosphocholine + a fatty acid + H(+). The enzyme catalyses 1,2-dihexadecanoyl-sn-glycero-3-phosphocholine + H2O = 1-hexadecanoyl-sn-glycero-3-phosphocholine + hexadecanoate + H(+). The catalysed reaction is 1-hexadecanoyl-2-(9Z-octadecenoyl)-sn-glycero-3-phosphocholine + H2O = 1-hexadecanoyl-sn-glycero-3-phosphocholine + (9Z)-octadecenoate + H(+). It catalyses the reaction 1-hexadecanoyl-2-(9Z,12Z-octadecadienoyl)-sn-glycero-3-phosphocholine + H2O = (9Z,12Z)-octadecadienoate + 1-hexadecanoyl-sn-glycero-3-phosphocholine + H(+). It carries out the reaction 1-hexadecanoyl-2-(4Z,7Z,10Z,13Z,16Z,19Z-docosahexaenoyl)-sn-glycero-3-phosphocholine + H2O = (4Z,7Z,10Z,13Z,16Z,19Z)-docosahexaenoate + 1-hexadecanoyl-sn-glycero-3-phosphocholine + H(+). In terms of biological role, secretory calcium-dependent phospholipase A2 that primarily targets extracellular phospholipids. Hydrolyzes the ester bond of the fatty acyl group attached at sn-2 position of phospholipids (phospholipase A2 activity), releasing various unsaturated fatty acids including oleoate, linoleoate, arachidonate, docosahexaenoate and lysophosphatidylethanolamines in preference to lysophosphatidylcholines. In response to high-fat diet, hydrolyzes minor lipoprotein phospholipids including phosphatidylserines, phosphatidylinositols and phosphatidylglycerols, altering lipoprotein composition and fat storage in adipose tissue and liver. May act in an autocrine and paracrine manner. Contributes to lipid remodeling of cellular membranes and generation of lipid mediators involved in pathogen clearance. Cleaves sn-2 fatty acyl chains of phosphatidylglycerols and phosphatidylethanolamines, which are major components of membrane phospholipids in bacteria. Acts as a hair follicle phospholipase A2. Selectively releases lysophosphatidylethanolamines (LPE) and various unsaturated fatty acids in skin to regulate hair follicle homeostasis. May regulate the inflammatory response by releasing arachidonate, a precursor of prostaglandins and leukotrienes. Upon allergen exposure, may participate in allergic inflammatory response by enhancing leukotriene C4 synthesis and degranulation in mast cells. The protein is Group IIE secretory phospholipase A2 (PLA2G2E) of Homo sapiens (Human).